The primary structure comprises 313 residues: MKVLWVALVITLLAGCQAEVEPEPEPEVQLGREWPGWQGSQPWEQALGRFWDYLRWVQTLSDQVQEELLSTQVIQELTVLMDETMKEVKAYREELEEQLGPIAQETQARVSKELQAAQARLASDMEDVRSRLAQYRSEVQAVMGQTTDELRGRLASHLRKLRKRLLRDAEDLQKRLAVYRAGAVEGSERSVSAIRERLGPLMEKGRGRAGTLASQTLRERAEAWHQKLRGRVEEMGTQARDHLEEIREQLEEVRAKVEEQGSQIRLQAEAFQARLKSWFEPLVEDMQRQWAGLVEKVQLAMATSSTSAPSENH.

The first 18 residues, 1 to 18 (MKVLWVALVITLLAGCQA), serve as a signal peptide directing secretion. 8 consecutive repeat copies span residues 79–100 (VLMDETMKEVKAYREELEEQLG), 101–122 (PIAQETQARVSKELQAAQARLA), 123–144 (SDMEDVRSRLAQYRSEVQAVMG), 145–166 (QTTDELRGRLASHLRKLRKRLL), 167–188 (RDAEDLQKRLAVYRAGAVEGSE), 189–209 (RSVSAIRERLGPLMEKGRGRA), 210–229 (GTLASQTLRERAEAWHQKLR), and 230–251 (GRVEEMGTQARDHLEEIREQLE). Residues 79-251 (VLMDETMKEV…HLEEIREQLE (173 aa)) are 8 X 22 AA approximate tandem repeats. Positions 157–167 (HLRKLRKRLLR) are LDL and other lipoprotein receptors binding. Residue 161-164 (LRKR) participates in heparin binding. The segment at 209-286 (AGTLASQTLR…SWFEPLVEDM (78 aa)) is lipid-binding and lipoprotein association. Residue 225–232 (HQKLRGRV) participates in heparin binding. Positions 262-313 (SQIRLQAEAFQARLKSWFEPLVEDMQRQWAGLVEKVQLAMATSSTSAPSENH) are homooligomerization. The specificity for association with VLDL stretch occupies residues 274-286 (RLKSWFEPLVEDM).

It belongs to the apolipoprotein A1/A4/E family. Homotetramer. May interact with ABCA1; functionally associated with ABCA1 in the biogenesis of HDLs. May interact with APP/A4 amyloid-beta peptide; the interaction is extremely stable in vitro but its physiological significance is unclear. May interact with MAPT. May interact with MAP2. In the cerebrospinal fluid, interacts with secreted SORL1. Interacts with PMEL; this allows the loading of PMEL luminal fragment on ILVs to induce fibril nucleation. In terms of processing, APOE exists as multiple glycosylated and sialylated glycoforms within cells and in plasma. The extent of glycosylation and sialylation are tissue and context specific. Glycated in plasma VLDL. Post-translationally, phosphorylated by FAM20C in the extracellular medium.

The protein localises to the secreted. The protein resides in the extracellular space. It localises to the extracellular matrix. Its subcellular location is the extracellular vesicle. It is found in the endosome. The protein localises to the multivesicular body. In terms of biological role, APOE is an apolipoprotein, a protein associating with lipid particles, that mainly functions in lipoprotein-mediated lipid transport between organs via the plasma and interstitial fluids. APOE is a core component of plasma lipoproteins and is involved in their production, conversion and clearance. Apolipoproteins are amphipathic molecules that interact both with lipids of the lipoprotein particle core and the aqueous environment of the plasma. As such, APOE associates with chylomicrons, chylomicron remnants, very low density lipoproteins (VLDL) and intermediate density lipoproteins (IDL) but shows a preferential binding to high-density lipoproteins (HDL). It also binds a wide range of cellular receptors including the LDL receptor/LDLR and the very low-density lipoprotein receptor/VLDLR that mediate the cellular uptake of the APOE-containing lipoprotein particles. Finally, APOE also has a heparin-binding activity and binds heparan-sulfate proteoglycans on the surface of cells, a property that supports the capture and the receptor-mediated uptake of APOE-containing lipoproteins by cells. The polypeptide is Apolipoprotein E (APOE) (Balaenoptera acutorostrata scammoni (North Pacific minke whale)).